A 581-amino-acid chain; its full sequence is Rhodanese-like domain-containing protein 6 (581 aa).

A Rhodanese domain is found at 158-258 (ENKELVLLDA…YLEQFPSGGF (101 aa)). C216 (cysteine persulfide intermediate) is an active-site residue.

The chain is Rhodanese-like domain-containing protein 6 (STR6) from Arabidopsis thaliana (Mouse-ear cress).